The chain runs to 284 residues: Ribosomal RNA small subunit methyltransferase A (284 aa).

S-adenosyl-L-methionine is bound by residues asparagine 12, leucine 14, glycine 38, glutamate 59, aspartate 81, and asparagine 106.

This sequence belongs to the class I-like SAM-binding methyltransferase superfamily. rRNA adenine N(6)-methyltransferase family. RsmA subfamily.

The protein resides in the cytoplasm. It catalyses the reaction adenosine(1518)/adenosine(1519) in 16S rRNA + 4 S-adenosyl-L-methionine = N(6)-dimethyladenosine(1518)/N(6)-dimethyladenosine(1519) in 16S rRNA + 4 S-adenosyl-L-homocysteine + 4 H(+). Its function is as follows. Specifically dimethylates two adjacent adenosines (A1518 and A1519) in the loop of a conserved hairpin near the 3'-end of 16S rRNA in the 30S particle. May play a critical role in biogenesis of 30S subunits. The protein is Ribosomal RNA small subunit methyltransferase A of Phytoplasma australiense.